We begin with the raw amino-acid sequence, 309 residues long: tRNA uridine(34) hydroxylase (309 aa).

One can recognise a Rhodanese domain in the interval 126-220 (SDPEVIVIDT…YLEQIPPEES (95 aa)). The active-site Cysteine persulfide intermediate is C180.

It belongs to the TrhO family.

It catalyses the reaction uridine(34) in tRNA + AH2 + O2 = 5-hydroxyuridine(34) in tRNA + A + H2O. Functionally, catalyzes oxygen-dependent 5-hydroxyuridine (ho5U) modification at position 34 in tRNAs. The polypeptide is tRNA uridine(34) hydroxylase (Nostoc sp. (strain PCC 7120 / SAG 25.82 / UTEX 2576)).